A 232-amino-acid chain; its full sequence is 5'-methylthioadenosine/S-adenosylhomocysteine nucleosidase (232 aa).

The active-site Proton acceptor is the E14. Substrate is bound by residues G80, V154, and 175–176; that span reads ME. Catalysis depends on D199, which acts as the Proton donor.

Belongs to the PNP/UDP phosphorylase family. MtnN subfamily.

It carries out the reaction S-adenosyl-L-homocysteine + H2O = S-(5-deoxy-D-ribos-5-yl)-L-homocysteine + adenine. The enzyme catalyses S-methyl-5'-thioadenosine + H2O = 5-(methylsulfanyl)-D-ribose + adenine. The catalysed reaction is 5'-deoxyadenosine + H2O = 5-deoxy-D-ribose + adenine. Its pathway is amino-acid biosynthesis; L-methionine biosynthesis via salvage pathway; S-methyl-5-thio-alpha-D-ribose 1-phosphate from S-methyl-5'-thioadenosine (hydrolase route): step 1/2. Its function is as follows. Catalyzes the irreversible cleavage of the glycosidic bond in both 5'-methylthioadenosine (MTA) and S-adenosylhomocysteine (SAH/AdoHcy) to adenine and the corresponding thioribose, 5'-methylthioribose and S-ribosylhomocysteine, respectively. Also cleaves 5'-deoxyadenosine, a toxic by-product of radical S-adenosylmethionine (SAM) enzymes, into 5-deoxyribose and adenine. This Actinobacillus pleuropneumoniae serotype 5b (strain L20) protein is 5'-methylthioadenosine/S-adenosylhomocysteine nucleosidase.